The chain runs to 554 residues: (Z)-gamma-bisabolene synthase 1 (554 aa).

4 residues coordinate Mg(2+): D306, D310, D450, and D458. The DDXXD motif signature appears at 306–310 (DDACD).

The protein belongs to the terpene synthase family. Tpsa subfamily. The cofactor is Mg(2+). Mn(2+) is required as a cofactor. In terms of tissue distribution, predominantly expressed in roots. Expressed in the cortex and the sub-epidermal layers of roots. Also detected in leaf hydathodes and flower stigmata.

It localises to the cytoplasm. It catalyses the reaction (2E,6E)-farnesyl diphosphate = (Z)-gamma-bisabolene + diphosphate. Its pathway is secondary metabolite biosynthesis; terpenoid biosynthesis. Its function is as follows. Involved in sesquiterpene (C15) biosynthesis. The major product is (Z)-gamma-bisabolene with minor amounts of (E)-nerolidol and alpha-bisabolol. The protein is (Z)-gamma-bisabolene synthase 1 (TPS12) of Arabidopsis thaliana (Mouse-ear cress).